We begin with the raw amino-acid sequence, 340 residues long: Tryptophan--tRNA ligase (340 aa).

ATP is bound by residues 11-13 and 19-20; these read RPT and GH. The 'HIGH' region signature appears at 12 to 20; it reads PTGKLHLGH. L-tryptophan is bound at residue Asp140. Residues 152-154, Leu194, and 202-206 contribute to the ATP site; these read GND and KMSKS. The 'KMSKS' region signature appears at 202 to 206; it reads KMSKS.

This sequence belongs to the class-I aminoacyl-tRNA synthetase family. As to quaternary structure, homodimer.

It is found in the cytoplasm. The catalysed reaction is tRNA(Trp) + L-tryptophan + ATP = L-tryptophyl-tRNA(Trp) + AMP + diphosphate + H(+). Catalyzes the attachment of tryptophan to tRNA(Trp). The sequence is that of Tryptophan--tRNA ligase from Streptococcus pyogenes serotype M3 (strain ATCC BAA-595 / MGAS315).